A 478-amino-acid chain; its full sequence is Methionine aminopeptidase 2-1 (478 aa).

The tract at residues 1–124 (MGSKSPEGHN…PRVPLSTLFP (124 aa)) is disordered. The segment covering 46–56 (NDDDDADDDEK) has biased composition (acidic residues). Residues 92 to 104 (KKKKKRKRSKKKA) show a composition bias toward basic residues. H230 contacts substrate. 3 residues coordinate a divalent metal cation: D251, D262, and H331. H339 serves as a coordination point for substrate. Positions 364 and 459 each coordinate a divalent metal cation.

It belongs to the peptidase M24A family. Methionine aminopeptidase eukaryotic type 2 subfamily. Co(2+) is required as a cofactor. Zn(2+) serves as cofactor. Requires Mn(2+) as cofactor. It depends on Fe(2+) as a cofactor.

It is found in the cytoplasm. The enzyme catalyses Release of N-terminal amino acids, preferentially methionine, from peptides and arylamides.. Cotranslationally removes the N-terminal methionine from nascent proteins. The N-terminal methionine is often cleaved when the second residue in the primary sequence is small and uncharged (Met-Ala-, Cys, Gly, Pro, Ser, Thr, or Val). The protein is Methionine aminopeptidase 2-1 of Aspergillus clavatus (strain ATCC 1007 / CBS 513.65 / DSM 816 / NCTC 3887 / NRRL 1 / QM 1276 / 107).